A 36-amino-acid chain; its full sequence is U1-ectatotoxin-Et1b subunit B (36 aa).

Residues cysteine 11 and cysteine 33 are joined by a disulfide bond.

It belongs to the ectatomin family. Ectatomin-Et subfamily. As to quaternary structure, heterodimer of subunits A and B; disulfide-linked. In terms of tissue distribution, expressed by the venom gland.

Its subcellular location is the secreted. It localises to the target cell membrane. The sequence is that of U1-ectatotoxin-Et1b subunit B from Ectatomma tuberculatum (Selva ant).